Here is a 250-residue protein sequence, read N- to C-terminus: Ribosomal RNA small subunit methyltransferase J (250 aa).

S-adenosyl-L-methionine contacts are provided by residues 96 to 97 (RD) and Asp-168.

It belongs to the methyltransferase superfamily. RsmJ family.

It localises to the cytoplasm. The catalysed reaction is guanosine(1516) in 16S rRNA + S-adenosyl-L-methionine = N(2)-methylguanosine(1516) in 16S rRNA + S-adenosyl-L-homocysteine + H(+). Functionally, specifically methylates the guanosine in position 1516 of 16S rRNA. This is Ribosomal RNA small subunit methyltransferase J from Neisseria gonorrhoeae (strain NCCP11945).